Consider the following 458-residue polypeptide: Tissue-resident T-cell transcription regulator protein ZNF683 (458 aa).

Disordered regions lie at residues 84–109 (PQDLGEDASNMRHQPPSLYKASTDSE) and 249–275 (TLHSQVESRSSRDTRTPGQAGVAAPTR). 3 C2H2-type zinc fingers span residues 301 to 323 (YECNVCGKNFGQLSNLKVHLRVH), 329 to 351 (FQCALCQKRFTQLAHLQKHHLVH), and 357 to 379 (HQCQVCHKRFSSSSNLKTHLRLH).

It belongs to the krueppel C2H2-type zinc-finger protein family. In terms of tissue distribution, expressed in tissue-resident memory T (Trm) cell population in non-lymphoid organs, such as skin and gut. Expressed in innate lymphocytes, including tissue-resident natural killer (trNK) and natural killer T (NKT) cells in thymus, spleen and liver.

The protein resides in the nucleus. Transcription factor that mediates a transcriptional program in various innate and adaptive immune tissue-resident lymphocyte T-cell types such as tissue-resident memory T (Trm), natural killer (trNK) and natural killer T (NKT) cells and negatively regulates gene expression of proteins that promote the egress of tissue-resident T-cell populations from non-lymphoid organs. Plays a role in the development, retention and long-term establishment of adaptive and innate tissue-resident lymphocyte T-cell types in non-lymphoid organs, such as the skin and gut, but also in other nonbarrier tissues like liver and kidney, and therefore may provide immediate immunological protection against reactivating infections or viral reinfection. Also plays a role in the differentiation of both thymic and peripheral NKT cells. Negatively regulates the accumulation of interferon-gamma (IFN-gamma) in NKT cells at steady state or after antigenic stimulation. Positively regulates granzyme B production in NKT cells after innate stimulation. Associates with the transcriptional repressor PRDM1/BLIMP1 to chromatin at gene promoter regions. The polypeptide is Tissue-resident T-cell transcription regulator protein ZNF683 (Mus musculus (Mouse)).